We begin with the raw amino-acid sequence, 228 residues long: Lipoprotein-releasing system ATP-binding protein LolD (228 aa).

Residues 5–228 enclose the ABC transporter domain; that stretch reads LRCHQVCKTY…DGLLTDITGA (224 aa). ATP is bound at residue 41–48; the sequence is GSSGSGKS.

This sequence belongs to the ABC transporter superfamily. Lipoprotein translocase (TC 3.A.1.125) family. As to quaternary structure, the complex is composed of two ATP-binding proteins (LolD) and two transmembrane proteins (LolC and LolE).

Its subcellular location is the cell inner membrane. Its function is as follows. Part of the ABC transporter complex LolCDE involved in the translocation of mature outer membrane-directed lipoproteins, from the inner membrane to the periplasmic chaperone, LolA. Responsible for the formation of the LolA-lipoprotein complex in an ATP-dependent manner. The sequence is that of Lipoprotein-releasing system ATP-binding protein LolD from Vibrio cholerae serotype O1 (strain ATCC 39315 / El Tor Inaba N16961).